A 235-amino-acid chain; its full sequence is Repeat element protein (235 aa).

Residues 57-235 (IFQELLERLS…ARRKKCRFSQ (179 aa)) are repeat element.

The protein is Repeat element protein of Campoletis sonorensis (CsIV).